The chain runs to 576 residues: Arginine--tRNA ligase (576 aa).

Positions 122-132 (PNVAKQMHVGH) match the 'HIGH' region motif.

The protein belongs to the class-I aminoacyl-tRNA synthetase family. In terms of assembly, monomer.

Its subcellular location is the cytoplasm. The enzyme catalyses tRNA(Arg) + L-arginine + ATP = L-arginyl-tRNA(Arg) + AMP + diphosphate. The sequence is that of Arginine--tRNA ligase from Yersinia pestis bv. Antiqua (strain Antiqua).